The chain runs to 344 residues: 17-beta-hydroxysteroid dehydrogenase type 1 (344 aa).

NAD(+) is bound at residue 3–32 (PTVVLITGCSSGIGMHLAVRLASDRSQSFK). Residues 10 to 38 (GCSS…ATLR) and Asp-66 contribute to the NADP(+) site. A Phosphoserine modification is found at Ser-135. Ser-143 is a substrate binding site. The active-site Proton acceptor is Tyr-156. Lys-160 is an NADP(+) binding site.

This sequence belongs to the short-chain dehydrogenases/reductases (SDR) family. In terms of assembly, homodimer. Exists predominantly as a homodimer but also exits as monomer.

It is found in the cytoplasm. The catalysed reaction is 17beta-estradiol + NAD(+) = estrone + NADH + H(+). It catalyses the reaction 17beta-estradiol + NADP(+) = estrone + NADPH + H(+). It carries out the reaction testosterone + NADP(+) = androst-4-ene-3,17-dione + NADPH + H(+). It participates in steroid biosynthesis; estrogen biosynthesis. Functionally, favors the reduction of estrogens and androgens. Converts estrone (E1) to a more potent estrogen, 17beta-estradiol (E2). Also has 20-alpha-HSD activity. Uses preferentially NADH. The sequence is that of 17-beta-hydroxysteroid dehydrogenase type 1 from Mus musculus (Mouse).